The primary structure comprises 468 residues: MASISSLGVGSGLDLSSILDSLTAAQKATLTPISNQQSSFTAKLSAYGTLKSALTTFQTANTALSKADLFSATSTTSSTTAFSATTAGNAIAGKYTISVTHLAQAQTLTTRTTRDDTKTAIATSDSKLTIQQGGDKDPITIDISAANSSLSGIRDAINNAKAGVSASIINVGNGEYRLSVTSNDTGLDNAMTLSVSGDDALQSFMGYDASASSNGMEVSVAAQNAQLTVNNVAIENSSNTISDALENITLNLNDVTTGNQTLTITQDTSKAQTAIKDWVNAYNSLIDTFSSLTKYTAVDAGADSQSSSNGALLGDSTLRTIQTQLKSMLSNTVSSSSYKTLAQIGITTDPSDGKLELDADKLTAALKKDASGVGALIVGDGKKTGITTTIGSNLTSWLSTTGIIKAATDGVSKTLNKLTKDYNAASDRIDAQVARYKEQFTQLDVLMTSLNSTSSYLTQQFENNSNSK.

Positions 411–439 (VSKTLNKLTKDYNAASDRIDAQVARYKEQ) form a coiled coil.

This sequence belongs to the FliD family. As to quaternary structure, homopentamer.

The protein localises to the secreted. The protein resides in the bacterial flagellum. Its function is as follows. Required for the morphogenesis and for the elongation of the flagellar filament by facilitating polymerization of the flagellin monomers at the tip of growing filament. Forms a capping structure, which prevents flagellin subunits (transported through the central channel of the flagellum) from leaking out without polymerization at the distal end. This Escherichia coli (strain K12) protein is Flagellar hook-associated protein 2 (fliD).